A 440-amino-acid polypeptide reads, in one-letter code: WAS/WASL-interacting protein family member 2 (440 aa).

Over residues 1–18 (MPIPPPPPPPPGPPPPPT) the composition is skewed to pro residues. The disordered stretch occupies residues 1-38 (MPIPPPPPPPPGPPPPPTFNQANTEQPKLSRDEQRNRG). One can recognise a WH2 domain in the interval 36 to 53 (NRGALLQDICKGTKLKKV). Residue Arg-37 is modified to Asymmetric dimethylarginine. Positions 49–52 (KLKK) are binds actin. Disordered regions lie at residues 56–386 (VNDR…RDSI) and 419–440 (RVYP…PILR). Over residues 116–132 (PSSRAAAPRPPGSAASG) the composition is skewed to low complexity. Composition is skewed to pro residues over residues 176-193 (APPP…PTPL), 225-236 (PAPPPVKPPPSP), 249-262 (APPP…PGVP), and 356-378 (RGKP…PPPL).

It belongs to the verprolin family. As to quaternary structure, interacts with WASL and WASP, and this interaction results in cytoplasmic relocation of these two proteins along actin filaments. Interacts with NCK2 resulting in the localization to sites of focal adhesions.

Its subcellular location is the cytoplasm. It is found in the cytoskeleton. Plays an active role in the formation of cell surface protrusions downstream of activated PDGFB receptors. Plays an important role in actin-microspike formation through cooperation with WASL. May cooperate with WASP and WASL to induce mobilization and reorganization of the actin filament system. This chain is WAS/WASL-interacting protein family member 2 (Wipf2), found in Mus musculus (Mouse).